A 99-amino-acid chain; its full sequence is (4S)-4-hydroxy-5-phosphonooxypentane-2,3-dione isomerase (99 aa).

The ABM domain occupies 2-91 (HVTLVEINVK…ISEPRKKRSF (90 aa)).

Belongs to the LsrG family. In terms of assembly, homodimer.

The protein resides in the cytoplasm. The enzyme catalyses (2S)-2-hydroxy-3,4-dioxopentyl phosphate = 3-hydroxy-2,4-dioxopentyl phosphate. In terms of biological role, involved in the degradation of phospho-AI-2, thereby terminating induction of the lsr operon and closing the AI-2 signaling cycle. Catalyzes the conversion of (4S)-4-hydroxy-5-phosphonooxypentane-2,3-dione (P-DPD) to 3-hydroxy-5-phosphonooxypentane-2,4-dione (P-HPD). The protein is (4S)-4-hydroxy-5-phosphonooxypentane-2,3-dione isomerase of Photorhabdus laumondii subsp. laumondii (strain DSM 15139 / CIP 105565 / TT01) (Photorhabdus luminescens subsp. laumondii).